Here is a 446-residue protein sequence, read N- to C-terminus: ASTKGPSVFPLAPCSRSTSGGTAALGCLVKDYFPEPVTVSWNSGALTSGVHTFPAVLQSSGLYSLSSVVTVPSSSLGTQTYTCNVNHKPSNTKVDKRVELKTPLGDTTHTCPRCPEPKSCDTPPPCPRCPEPKSCDTPPPCPRCPEPKSCDTPPPCPRCPAPELLGGPSVFLFPPKPKDTLMISRTPEVTCVVVDVSHEDPEVQFKWYVDGVEVHNAKTKPREEQYNSTFRVVSVLTVLHQDWLNGKEYKCKVSNKALPAPIEKTISKTKGQPREPQVYTLPPSREEMTKNQVSLTCLVKGFYPSDIAVEWESSGQPENNYNTTPPMLDSDGSFFLYSKLTVDKSRWQQGNIFSCSVMHEALHNRFTQKSLSLSPELQLEESCAEAQDGELDGLWTTITIFITLFLLSVCYSATVTFFKVKWIFSSVVDLKQTIIPDYRNMIGQGA.

Residues 1 to 98 form a CH1 region; that stretch reads ASTKGPSVFP…PSNTKVDKRV (98 aa). The Extracellular segment spans residues 1-397; it reads ASTKGPSVFP…DGELDGLWTT (397 aa). The 94-residue stretch at 6-99 folds into the Ig-like 1 domain; sequence PSVFPLAPCS…SNTKVDKRVE (94 aa). Cys-27 and Cys-83 are oxidised to a cystine. The interval 99–160 is hinge; sequence ELKTPLGDTT…DTPPPCPRCP (62 aa). Repeats lie at residues 116–130, 131–145, and 146–160; these read EPKSCDTPPPCPRCP. Residues Thr-122, Thr-137, and Thr-152 are each glycosylated (O-linked (GalNAc...) threonine). The interval 161–270 is CH2; that stretch reads APELLGGPSV…PIEKTISKTK (110 aa). 2 consecutive Ig-like domains span residues 168–267 and 276–372; these read PSVF…KTIS and PQVY…KSLS. 2 disulfides stabilise this stretch: Cys-191-Cys-251 and Cys-297-Cys-355. Asn-227 and Asn-322 each carry an N-linked (GlcNAc...) asparagine glycan. The tract at residues 271-376 is CH3; that stretch reads GQPREPQVYT…TQKSLSLSPE (106 aa). A helical transmembrane segment spans residues 398-418; sequence ITIFITLFLLSVCYSATVTFF. Residues 419–446 lie on the Cytoplasmic side of the membrane; sequence KVKWIFSSVVDLKQTIIPDYRNMIGQGA.

In terms of assembly, immunoglobulins are composed of two identical heavy chains and two identical light chains; disulfide-linked. Post-translationally, N-linked glycans at Asn-322 are noncore fucosylated and the vast majority are diantennary species with a bisecting GlcNAc. Among them the most dominant glycans are HexNAc5Hex4, HexNAc5Hex5, and HexNAc5Hex5Sia1. N-linked glycans at Asn-227 are diantennary core fucosylated structures without bisecting GlcNAc (HexNAc4Hex4Fuc1, HexNAc4Hex5Fuc1, and HexNAc4Hex5Fuc1Sia1). Glycosylation on Asn-227 is required for interaction with Fc receptors and ability to activate the complement pathway. In terms of processing, (Microbial infection) Deglycosylation on Asn-227 by S.pyogenes EndoS or Endos2 endoglucosidases prevents interaction between immunoglobulin-gamma (IgG) and Fc receptors, impairing ability to activate the complement pathway. Post-translationally, O-linked glycans are non-, mono- and disialylated core 1-type O-glycans.

It localises to the secreted. The protein resides in the cell membrane. Functionally, constant region of immunoglobulin heavy chains. Immunoglobulins, also known as antibodies, are membrane-bound or secreted glycoproteins produced by B lymphocytes. In the recognition phase of humoral immunity, the membrane-bound immunoglobulins serve as receptors which, upon binding of a specific antigen, trigger the clonal expansion and differentiation of B lymphocytes into immunoglobulins-secreting plasma cells. Secreted immunoglobulins mediate the effector phase of humoral immunity, which results in the elimination of bound antigens. The antigen binding site is formed by the variable domain of one heavy chain, together with that of its associated light chain. Thus, each immunoglobulin has two antigen binding sites with remarkable affinity for a particular antigen. The variable domains are assembled by a process called V-(D)-J rearrangement and can then be subjected to somatic hypermutations which, after exposure to antigen and selection, allow affinity maturation for a particular antigen. The chain is Immunoglobulin heavy constant gamma 3 from Homo sapiens (Human).